Here is a 1032-residue protein sequence, read N- to C-terminus: Exo-beta-D-glucosaminidase (1032 aa).

Residues 1-32 (MSFRQKRTRIPLLAMTVTALAAAVCGVTTAPA) form the signal peptide. A propeptide spanning residues 33–46 (ATGAEVAVPLSVGA) is cleaved from the precursor. D469 (proton donor) is an active-site residue. The active-site Nucleophile is the E541. The interval 883 to 908 (SVRISGWNTGTQTVPADGSGPGPSDP) is disordered. In terms of domain architecture, CBM6 spans 909–1032 (VDYQAEDATI…GGPNVDKITL (124 aa)).

The protein belongs to the glycosyl hydrolase 2 family. As to quaternary structure, monomer.

It localises to the secreted. The catalysed reaction is Hydrolysis of chitosan or chitosan oligosaccharides to remove successive D-glucosamine residues from the non-reducing termini.. Its function is as follows. Hydrolyzes chitosan and chitooligosaccharides with retention of anomeric configuration. Has maximum activity on chitotetraose, chitopentaose and their corresponding alcohols, with a slight decrease in the rate of hydrolysis on longer chains. Has no activity against beta-D-glucopyranoside, beta-D-xylopyranoside, beta-D-mannoside, beta-D-glucuronide, beta-D-galactoside, beta-D-N-acetylgalactosamide, beta-D-N-acetylglucosaminide and alpha-D-N-acetylglucosaminide. This Amycolatopsis orientalis (Nocardia orientalis) protein is Exo-beta-D-glucosaminidase.